The primary structure comprises 147 residues: Hemoglobin subunit beta-1 (147 aa).

An N-acetylserine modification is found at serine 2. In terms of domain architecture, Globin spans 3–147 (FLSAEEKGLV…VASALAHRYH (145 aa)). Lysine 18 carries the N6-succinyllysine modification. A phosphoserine mark is found at serine 45 and serine 51. Lysine 60 carries the post-translational modification N6-succinyllysine. The heme b site is built by histidine 64 and histidine 93. Position 105 is an asymmetric dimethylarginine (arginine 105).

The protein belongs to the globin family. As to quaternary structure, heterotetramer of two alpha chains and two beta chains. In terms of tissue distribution, red blood cells.

Its function is as follows. Involved in oxygen transport from the lung to the various peripheral tissues. This chain is Hemoglobin subunit beta-1 (HBB1), found in Panthera onca (Jaguar).